The following is a 131-amino-acid chain: Leptin receptor gene-related protein (131 aa).

Helical transmembrane passes span 7–27 (LVGL…GCAL), 32–52 (VYWP…HFIA), 69–89 (LAYF…IILA), and 100–120 (GLVL…FLVF).

It belongs to the OB-RGRP/VPS55 family.

Its subcellular location is the golgi apparatus membrane. It is found in the endosome membrane. In terms of biological role, involved in protein trafficking. May be involved in the down-regulation of membrane protein levels. The chain is Leptin receptor gene-related protein (LEPROT) from Gallus gallus (Chicken).